We begin with the raw amino-acid sequence, 148 residues long: MSGSKSPRGEFAGRKLRLKRKWCRWHDYNYVRRVLKLKEKYDPLEGAPMARGIVIEKVGLEAKQPNSAIRKCVRVQLIKNGRVVTAFCPGNHAINFIDEHDEVIIEGIGGPKGPRAKGDIPGVKYKVIMVGRNSLRELVRGRQEKIKR.

It belongs to the universal ribosomal protein uS12 family. In terms of assembly, part of the 30S ribosomal subunit.

Its function is as follows. With S4 and S5 plays an important role in translational accuracy. Located at the interface of the 30S and 50S subunits. This is Small ribosomal subunit protein uS12 from Methanocaldococcus jannaschii (strain ATCC 43067 / DSM 2661 / JAL-1 / JCM 10045 / NBRC 100440) (Methanococcus jannaschii).